The primary structure comprises 367 residues: Putrescine/agmatine-binding protein (367 aa).

The first 19 residues, 1–19, serve as a signal peptide directing secretion; sequence MKKVCALALSILTTIGATA.

This sequence belongs to the bacterial solute-binding protein 1 family.

It localises to the periplasm. Its function is as follows. Binds putrescine and agmatine. This is Putrescine/agmatine-binding protein from Pseudomonas aeruginosa (strain ATCC 15692 / DSM 22644 / CIP 104116 / JCM 14847 / LMG 12228 / 1C / PRS 101 / PAO1).